The primary structure comprises 365 residues: Gibberellin 20 oxidase 1-A (365 aa).

The region spanning 199-299 (GNDSIMRLNY…RKSLAFFLCP (101 aa)) is the Fe2OG dioxygenase domain. Positions 224, 226, and 280 each coordinate Fe cation. Arginine 290 is an active-site residue.

Belongs to the iron/ascorbate-dependent oxidoreductase family. GA20OX subfamily. It depends on Fe cation as a cofactor. Requires L-ascorbate as cofactor. Expressed in nodes and the ear of the elongating stem.

The catalysed reaction is gibberellin A12 + 2 2-oxoglutarate + 3 O2 + H(+) = gibberellin A9 + 2 succinate + 3 CO2 + 2 H2O. The enzyme catalyses gibberellin A53 + 2 2-oxoglutarate + 3 O2 + H(+) = gibberellin A20 + 2 succinate + 3 CO2 + 2 H2O. In terms of biological role, key oxidase enzyme in the biosynthesis of gibberellin that catalyzes the conversion of GA12 and GA53 to GA9 and GA20 respectively, via a three-step oxidation at C-20 of the GA skeleton. The chain is Gibberellin 20 oxidase 1-A (GA20ox1A) from Triticum aestivum (Wheat).